The sequence spans 715 residues: MAPAPVTLLAPGAASSMSCSQPGQRSPSNDFQVLRGTELQHLLHAVVPGPWQEDVADAEECAGRCGPLMDCWAFHYNVSSHGCQLLPWTQHSPHSRLWHSGRCDLFQEKGEWGYMPTLRNGLEENFCRNPDGDPGGPWCHTTDPAVRFQSCSIKSCRVAACVWCNGEEYRGAVDRTESGRECQRWDLQHPHQHPFEPGKFLDQGLDDNYCRNPDGSERPWCYTTDPQIEREFCDLPRCGSEAQPRQEATSVSCFRGKGEGYRGTANTTTAAYLASVGTRKSHISTDLRQKNTRASEVGGGAGVGTCCCGDLRENFCWNLDGSEAPWCFTLRPGTRVGFCYQIRRCTDDVRPQDCYHGAGEQYRGTVSKTRKGVQCQRWSAETPHKLQALTLGRHALMSGTRAWKWLRLPCHDFAPAPASVHIYLRTACTTGGELLPDPDGDSHGPWCYTMDPRTPFDYCALRRCDQVQFEKCGKRVDRLDQRRSKLRVAGGHPGNSPWTVSLRNRQGQHFCAGSLVKEQWILTARQCFSSCHMPLTGYEVWLGTLFQNPQHGEPGLQRVPVAKMLCGPSGSQLVLLKLERSVTLNQRVALICLPPEWYVVPPGTKCEIAGWGETKGTGNDTVLNVALLNVISNQECNIKHRGHVRESEMCTEGLLAPVGACEGDYGGPLACFTHNCWVLKGIRIPNRVCTRSRWPAVFTRVSVFVDWIHKVMRLG.

The N-terminal stretch at 1-20 is a signal peptide; the sequence is MAPAPVTLLAPGAASSMSCS. The region spanning 21–110 is the PAN domain; sequence QPGQRSPSND…GRCDLFQEKG (90 aa). Kringle domains follow at residues 63 to 156, 160 to 238, 252 to 345, and 353 to 464; these read GRCG…IKSC, ACVW…LPRC, SCFR…IRRC, and DCYH…LRRC. 12 disulfide bridges follow: Cys127/Cys151, Cys161/Cys238, Cys182/Cys221, Cys210/Cys233, Cys253/Cys345, Cys316/Cys339, Cys354/Cys464, Cys375/Cys447, Cys511/Cys527, Cys606/Cys671, Cys636/Cys650, and Cys661/Cys689. The region spanning 488–713 is the Peptidase S1 domain; the sequence is VAGGHPGNSP…FVDWIHKVMR (226 aa).

Belongs to the peptidase S1 family. Plasminogen subfamily.

Its subcellular location is the secreted. The chain is Putative macrophage stimulating 1-like protein (MST1L) from Homo sapiens (Human).